A 756-amino-acid polypeptide reads, in one-letter code: Ribonucleoside-diphosphate reductase subunit alpha (756 aa).

The region spanning 5–95 (LMVTKRDGTQ…IFHLRKKAYG (91 aa)) is the ATP-cone domain. ATP is bound by residues lysine 9, 15 to 21 (EQINLDK), threonine 55, and lysine 91. Residue threonine 209 coordinates GDP. Cysteines 225 and 462 form a disulfide. DTTP-binding positions include 232–234 (DSL), arginine 262, and arginine 269. Residue asparagine 437 participates in GDP binding. Residue asparagine 437 is the Proton acceptor of the active site. The active-site Cysteine radical intermediate is the cysteine 439. Residues glutamate 441 and 623–625 (ETS) contribute to the GDP site. The Proton acceptor role is filled by glutamate 441.

It belongs to the ribonucleoside diphosphate reductase large chain family. In terms of assembly, tetramer of two alpha and two beta subunits.

It carries out the reaction a 2'-deoxyribonucleoside 5'-diphosphate + [thioredoxin]-disulfide + H2O = a ribonucleoside 5'-diphosphate + [thioredoxin]-dithiol. With respect to regulation, under complex allosteric control mediated by deoxynucleoside triphosphates and ATP binding to separate specificity and activation sites on the alpha subunit. The type of nucleotide bound at the specificity site determines substrate preference. It seems probable that ATP makes the enzyme reduce CDP and UDP, dGTP favors ADP reduction and dTTP favors GDP reduction. Stimulated by ATP and inhibited by dATP binding to the activity site. In terms of biological role, provides the precursors necessary for DNA synthesis. Catalyzes the biosynthesis of deoxyribonucleotides from the corresponding ribonucleotides. The sequence is that of Ribonucleoside-diphosphate reductase subunit alpha (nrdA) from Haemophilus influenzae (strain ATCC 51907 / DSM 11121 / KW20 / Rd).